A 504-amino-acid polypeptide reads, in one-letter code: Probable cytochrome P450 305a1 (504 aa).

Cys-450 provides a ligand contact to heme.

This sequence belongs to the cytochrome P450 family. Requires heme as cofactor.

It localises to the endoplasmic reticulum membrane. It is found in the microsome membrane. Its function is as follows. May be involved in the metabolism of insect hormones and in the breakdown of synthetic insecticides. In Drosophila melanogaster (Fruit fly), this protein is Probable cytochrome P450 305a1 (Cyp305a1).